Reading from the N-terminus, the 564-residue chain is Proline--tRNA ligase (564 aa).

This sequence belongs to the class-II aminoacyl-tRNA synthetase family. ProS type 1 subfamily. In terms of assembly, homodimer.

Its subcellular location is the cytoplasm. The enzyme catalyses tRNA(Pro) + L-proline + ATP = L-prolyl-tRNA(Pro) + AMP + diphosphate. Functionally, catalyzes the attachment of proline to tRNA(Pro) in a two-step reaction: proline is first activated by ATP to form Pro-AMP and then transferred to the acceptor end of tRNA(Pro). As ProRS can inadvertently accommodate and process non-cognate amino acids such as alanine and cysteine, to avoid such errors it has two additional distinct editing activities against alanine. One activity is designated as 'pretransfer' editing and involves the tRNA(Pro)-independent hydrolysis of activated Ala-AMP. The other activity is designated 'posttransfer' editing and involves deacylation of mischarged Ala-tRNA(Pro). The misacylated Cys-tRNA(Pro) is not edited by ProRS. This chain is Proline--tRNA ligase, found in Bacillus velezensis (strain DSM 23117 / BGSC 10A6 / LMG 26770 / FZB42) (Bacillus amyloliquefaciens subsp. plantarum).